The sequence spans 581 residues: Transcription activator GAGA (581 aa).

Positions 34–99 (VDCTLAAGGR…VYRGEVSVDH (66 aa)) constitute a BTB domain. An interaction with E(bx) region spans residues 201–397 (VIQAFLPARK…SSGSGSGALS (197 aa)). Phosphothreonine is present on Thr-237. Disordered stretches follow at residues 298 to 343 (ITPA…EQPA) and 364 to 404 (LRHF…SVPQ). Residues 343 to 366 (ATCPICYAVIRQSRNLRRHLELRH) form a C2H2-type; degenerate zinc finger. Low complexity predominate over residues 381–401 (GKKSSSGSSGSGSGALSSSGS).

Interacts with Bin1, lolal, corto, ttk and ph-p. Interacts with FACT subunits Ssrp and dre4/SPT16. Interacts with E(bx). Upon ecdysone stimulation, interacts with Nup98. The N-terminus is blocked. In terms of tissue distribution, expressed in the central nervous system throughout development.

Its subcellular location is the nucleus. It localises to the chromosome. Its function is as follows. Transcriptional activator that functions by regulating chromatin structure. Overcomes the repressive effects of chromatin by promoting the open chromatin conformation in promoter gene regions, thereby allowing access to other transcription factors. Binds to DNA Polycomb response elements (PREs) at the bithorax complex and to the proximal region of the engrailed promoter, and positively regulates transcription of many genes including homeotic ones. Involved in zygotic genome activation (ZGA), a critical event in early embryonic development during which the developmental control passes from maternally provided mRNAs to the expression of the zygotic genome after fertilization. Binds to the DNA sequence (GA)n, with optimal binding to the pentamer 5'-GAGAG-3'. Binds DNA as an oligomer. May also act as a transcriptional repressor, maintaining the repressed state of genes including lolal, and down-regulating its own transcription. Required for dosage compensation in males and may be involved in oogenesis. Also has a role in nuclear division. This chain is Transcription activator GAGA (Trl), found in Drosophila melanogaster (Fruit fly).